The primary structure comprises 239 residues: Peptidyl-tRNA hydrolase (239 aa).

Residue tyrosine 14 participates in tRNA binding. Catalysis depends on histidine 19, which acts as the Proton acceptor. Residues phenylalanine 64, asparagine 66, and asparagine 112 each contribute to the tRNA site. The disordered stretch occupies residues glutamate 199 to methionine 227. The segment covering glutamine 203 to arginine 213 has biased composition (basic residues).

The protein belongs to the PTH family. As to quaternary structure, monomer.

It localises to the cytoplasm. It catalyses the reaction an N-acyl-L-alpha-aminoacyl-tRNA + H2O = an N-acyl-L-amino acid + a tRNA + H(+). Its function is as follows. Hydrolyzes ribosome-free peptidyl-tRNAs (with 1 or more amino acids incorporated), which drop off the ribosome during protein synthesis, or as a result of ribosome stalling. Functionally, catalyzes the release of premature peptidyl moieties from peptidyl-tRNA molecules trapped in stalled 50S ribosomal subunits, and thus maintains levels of free tRNAs and 50S ribosomes. In Chelativorans sp. (strain BNC1), this protein is Peptidyl-tRNA hydrolase.